The following is a 234-amino-acid chain: Large ribosomal subunit protein uL1 (234 aa).

Belongs to the universal ribosomal protein uL1 family. Part of the 50S ribosomal subunit.

Functionally, binds directly to 23S rRNA. The L1 stalk is quite mobile in the ribosome, and is involved in E site tRNA release. Its function is as follows. Protein L1 is also a translational repressor protein, it controls the translation of the L11 operon by binding to its mRNA. This Syntrophobacter fumaroxidans (strain DSM 10017 / MPOB) protein is Large ribosomal subunit protein uL1.